We begin with the raw amino-acid sequence, 394 residues long: MEGGGGAPAADAVMEDAAPQQQEPQQQAAMGIENIPATLSHGGRFIQYNIFGNIFEVTAKYRPPIMPIGKGAYGIVCSAHNSETNEHVAVKKIANAFDNKIDAKRTLREIKLVRHMDHENVVAIRDIVPPPQREVFNDVYIAYELMDTDLHQIIRSNQALSEEHCQYFLYQILRGLKYIHSANVLHRDLKPSNLLLNANCDLKICDFGLARVTSETDFMTEYVVTRWYRAPELLLNSSDYTAAIDVWSVGCIFMELMDRKPLFPGRDHVHQLRLLMELIGTPSEADLGFLNENAKRYIRQLPLYRRQSFQEKFPHVHPEAIDLVEKMLTFDPRQRITVENALAHPYLTSLHDISDEPVCTTPFSFDFEQHALTEEQMKELIYREALAFNPEYQQ.

One can recognise a Protein kinase domain in the interval 62–347; that stretch reads RPPIMPIGKG…VENALAHPYL (286 aa). Residues 68–76 and Lys91 each bind ATP; that span reads IGKGAYGIV. The active-site Proton acceptor is Asp188. At Thr220 the chain carries Phosphothreonine. Positions 220 to 222 match the TXY motif; it reads TEY. At Tyr222 the chain carries Phosphotyrosine.

It belongs to the protein kinase superfamily. CMGC Ser/Thr protein kinase family. MAP kinase subfamily. Requires Mg(2+) as cofactor. Post-translationally, dually phosphorylated on Thr-220 and Tyr-222, which activates the enzyme. In terms of tissue distribution, leaves, roots, root apices, and dormant and growing axillary buds.

It catalyses the reaction L-seryl-[protein] + ATP = O-phospho-L-seryl-[protein] + ADP + H(+). It carries out the reaction L-threonyl-[protein] + ATP = O-phospho-L-threonyl-[protein] + ADP + H(+). With respect to regulation, activated by tyrosine and threonine phosphorylation. This chain is Mitogen-activated protein kinase homolog D5, found in Pisum sativum (Garden pea).